The following is a 359-amino-acid chain: DNA polymerase IV (359 aa).

Residues Ile4–Gly185 enclose the UmuC domain. Residues Asp8 and Asp103 each coordinate Mg(2+). Glu104 is an active-site residue.

Belongs to the DNA polymerase type-Y family. In terms of assembly, monomer. Mg(2+) is required as a cofactor.

Its subcellular location is the cytoplasm. The catalysed reaction is DNA(n) + a 2'-deoxyribonucleoside 5'-triphosphate = DNA(n+1) + diphosphate. Its function is as follows. Poorly processive, error-prone DNA polymerase involved in untargeted mutagenesis. Copies undamaged DNA at stalled replication forks, which arise in vivo from mismatched or misaligned primer ends. These misaligned primers can be extended by PolIV. Exhibits no 3'-5' exonuclease (proofreading) activity. May be involved in translesional synthesis, in conjunction with the beta clamp from PolIII. In Shewanella loihica (strain ATCC BAA-1088 / PV-4), this protein is DNA polymerase IV.